The primary structure comprises 931 residues: Bifunctional glutamine synthetase adenylyltransferase/adenylyl-removing enzyme (931 aa).

Residues 1-434 (MTLAPADLPV…STEFAALLAP (434 aa)) are adenylyl removase. Residues 441-931 (PDALANYWRS…ACRAAELPFA (491 aa)) are adenylyl transferase.

The protein belongs to the GlnE family. Mg(2+) is required as a cofactor.

It catalyses the reaction [glutamine synthetase]-O(4)-(5'-adenylyl)-L-tyrosine + phosphate = [glutamine synthetase]-L-tyrosine + ADP. The enzyme catalyses [glutamine synthetase]-L-tyrosine + ATP = [glutamine synthetase]-O(4)-(5'-adenylyl)-L-tyrosine + diphosphate. Functionally, involved in the regulation of glutamine synthetase GlnA, a key enzyme in the process to assimilate ammonia. When cellular nitrogen levels are high, the C-terminal adenylyl transferase (AT) inactivates GlnA by covalent transfer of an adenylyl group from ATP to specific tyrosine residue of GlnA, thus reducing its activity. Conversely, when nitrogen levels are low, the N-terminal adenylyl removase (AR) activates GlnA by removing the adenylyl group by phosphorolysis, increasing its activity. The regulatory region of GlnE binds the signal transduction protein PII (GlnB) which indicates the nitrogen status of the cell. The chain is Bifunctional glutamine synthetase adenylyltransferase/adenylyl-removing enzyme from Stenotrophomonas maltophilia (strain K279a).